A 524-amino-acid chain; its full sequence is Leucine-rich repeat-containing protein 1 (524 aa).

17 LRR repeats span residues 11–34 (NRHV…IYRY), 35–58 (ARSL…FFQL), 60–81 (KLRK…IANF), 83–105 (QLVE…AFCK), 107–126 (LQVA…SFPE), 127–149 (LQNL…NIGN), 150–172 (LYNL…SLTQ), 173–196 (LRRL…IGAL), 198–218 (HLKD…EIGN), 219–242 (LKNL…ISGL), 244–264 (SLTY…GIGK), 265–288 (LKKL…IGDC), 290–310 (NLTE…SIGK), 311–334 (LKKL…IGGC), 336–356 (SLTM…EVSQ), 357–380 (AVEL…LTTL), and 382–405 (LKAL…IDRA). Positions 456-512 (SAIRFLEDEKDEDENETRTLQRRATPHPGELKNMKKTVENLRNDMNAAKGLDSNKNE) form a coiled coil. The segment at 464–485 (EKDEDENETRTLQRRATPHPGE) is disordered. Residue Thr-480 is modified to Phosphothreonine.

As to quaternary structure, interacts with DLG1. May form a complex with DLG1 and ERBIN, where interaction between LRRC1 and ERBIN is indirect.

The protein localises to the cytoplasm. The protein resides in the membrane. The sequence is that of Leucine-rich repeat-containing protein 1 (Lrrc1) from Mus musculus (Mouse).